The following is a 463-amino-acid chain: Cytochrome c-552 (463 aa).

The signal sequence occupies residues 1–23 (MNVKSIALSAVIATSFLAAGAMA). Histidine 83 provides a ligand contact to heme c. 3 residues coordinate heme: cysteine 111, cysteine 114, and lysine 115. Heme c-binding residues include cysteine 149, cysteine 152, histidine 153, cysteine 191, cysteine 194, and histidine 195. Ca(2+) contacts are provided by glutamate 197, tyrosine 198, lysine 246, and glutamine 248. A substrate-binding site is contributed by tyrosine 198. Histidine 249 contributes to the substrate binding site. Positions 260, 267, 270, 271, 286, 299, 302, 303, and 378 each coordinate heme c.

It belongs to the cytochrome c-552 family. Ca(2+) serves as cofactor. It depends on heme c as a cofactor.

It is found in the periplasm. It carries out the reaction 6 Fe(III)-[cytochrome c] + NH4(+) + 2 H2O = 6 Fe(II)-[cytochrome c] + nitrite + 8 H(+). It functions in the pathway nitrogen metabolism; nitrate reduction (assimilation). Functionally, catalyzes the reduction of nitrite to ammonia, consuming six electrons in the process. This chain is Cytochrome c-552, found in Shewanella frigidimarina (strain NCIMB 400).